Here is a 144-residue protein sequence, read N- to C-terminus: uncharacterized protein (144 aa).

A signal peptide spans 1 to 22; it reads MCTDVAFFSLDCLATWLGGVCS.

This is an uncharacterized protein from Saccharomyces cerevisiae (strain ATCC 204508 / S288c) (Baker's yeast).